Consider the following 390-residue polypeptide: Calcium-binding and spermatid-specific protein 1 (390 aa).

Disordered regions lie at residues 1 to 23 (MAEDGSPKIYSRPPRDSSKTPTE), 82 to 109 (ASLKSTTLPEKEITTPTETTNSKPKESI), and 146 to 225 (TIDA…TIPD). Residues 162–174 (ETQEDSSANDEDT) are compositionally biased toward acidic residues. Residues 184-193 (TDVSSSTSSD) are compositionally biased toward low complexity. Residues serine 251 and serine 267 each carry the phosphoserine modification. Threonine 280 carries the post-translational modification Phosphothreonine; by CK2. Serine 312 carries the phosphoserine modification. Residues 330-344 (EPHVDTKNSPEKDAA) show a composition bias toward basic and acidic residues. Positions 330–390 (EPHVDTKNSP…LKEEPDELMM (61 aa)) are disordered. Phosphoserine is present on residues serine 346, serine 356, serine 371, and serine 375. The span at 346-364 (SVTNVTEEFPSVTSVVEQS) shows a compositional bias: polar residues.

In terms of tissue distribution, expressed in seminiferous tubules of the testis in step 10 spermatids (stage X), subsequently increasing to reach maximal levels of step 18 elongated spermatids (stage VI) (at protein level). Strongly expressed in testis. Weakly expressed in olfactory epithelium. Expressed in spermatids of seminiferous tubules at steps 4-14 (stages IV to XIV of the seminiferous epithelium classification).

It is found in the cytoplasm. The protein resides in the mitochondrion inner membrane. The protein localises to the cell projection. Its subcellular location is the cilium. It localises to the flagellum. It is found in the cytoplasmic vesicle. The protein resides in the secretory vesicle. The protein localises to the acrosome. Its function is as follows. Calcium-binding protein. Essential for maintaining the structural integrity of the sperm flagella. This is Calcium-binding and spermatid-specific protein 1 (Cabs1) from Rattus norvegicus (Rat).